The primary structure comprises 284 residues: RNase adapter protein RapZ (284 aa).

Residue Gly-8–Ser-15 participates in ATP binding. GTP is bound at residue Asp-56 to Asn-59. Residues Arg-266–Pro-284 are RNA-binding.

This sequence belongs to the RapZ-like family. RapZ subfamily. As to quaternary structure, homotrimer.

Its function is as follows. Modulates the synthesis of GlmS, by affecting the processing and stability of the regulatory small RNA GlmZ. When glucosamine-6-phosphate (GlcN6P) concentrations are high in the cell, RapZ binds GlmZ and targets it to cleavage by RNase E. Consequently, GlmZ is inactivated and unable to activate GlmS synthesis. Under low GlcN6P concentrations, RapZ is sequestered and inactivated by an other regulatory small RNA, GlmY, preventing GlmZ degradation and leading to synthesis of GlmS. The chain is RNase adapter protein RapZ from Shigella dysenteriae serotype 1 (strain Sd197).